The sequence spans 1205 residues: ATP-dependent DNA helicase MER3 homolog (1205 aa).

The Helicase ATP-binding domain occupies 41 to 236; the sequence is PACFLSDVNM…WLAVPSEGIK (196 aa). 54-61 provides a ligand contact to ATP; sequence APTGSGKT. A DEAH box motif is present at residues 172–175; sequence DEVH. The region spanning 266–467 is the Helicase C-terminal domain; that stretch reads RLQSFIFDIL…CAVEHLNAEI (202 aa). The SEC63 domain occupies 541-852; it reads PLEPGRLMTK…FEEYVGLDIH (312 aa). Positions 1075-1091 are enriched in polar residues; it reads QKSEILNRTQGKNSTQL. Residues 1075-1131 form a disordered region; it reads QKSEILNRTQGKNSTQLAGKKAFEKSKTPDENSLHFVGKRDSSSEKSKALSKTPDEN. Residues 1095 to 1122 are compositionally biased toward basic and acidic residues; sequence KAFEKSKTPDENSLHFVGKRDSSSEKSK.

It belongs to the helicase family. SKI2 subfamily. As to expression, transcribed preferentially in early stages of meiocyte development and during meiosis in young flowers.

The protein localises to the nucleus. Its subcellular location is the chromosome. It catalyses the reaction Couples ATP hydrolysis with the unwinding of duplex DNA by translocating in the 3'-5' direction.. The catalysed reaction is ATP + H2O = ADP + phosphate + H(+). DNA helicase required for crossover formation, complete synapsis of homologous chromosomes and bivalent formation during meiosis. Is specific to recombination events resulting in interference-sensitive crossovers (class I meiotic crossover). Works cooperatively with ZIP4 to promote crossovers. This Oryza sativa subsp. japonica (Rice) protein is ATP-dependent DNA helicase MER3 homolog.